Reading from the N-terminus, the 340-residue chain is MKALVKREANKGIWLEQVPVPTPGPNEVLIKLEKTAICGTDLHIYLWDEWSQRTIRPGLTIGHEFVGRVAELGSAVTGYQVGQRVSAEGHIVCGHCRNCRGGRPHLCPNTVGIGVNVNGAFAEYMVMPASNLWLIPDQIPSELAAFFDPYGNAAHCALEFDVIGEDVLITGAGPIGIIAAGICKHIGARNVVVTDVNDFRLKLAADMGATRVVNVSKTSLKDVMADLHMEGFDVGLEMSGNPRAFNDMLDCMYHGGKIAMLGIMPRGAGCDWDKIIFKGLTVQGIYGRKMYETWYKMTQLVLSGFPLHKVLTHQLPIDDFQKGFDLMEEGKAGKVVLSWN.

Cys-38 provides a ligand contact to Zn(2+). Residues Thr-40 and His-43 each act as charge relay system in the active site. Zn(2+) is bound by residues His-63, Glu-64, Cys-93, Cys-96, Cys-99, and Cys-107. NAD(+) contacts are provided by residues Ile-175, Asp-195, Arg-200, 261 to 263, and 285 to 286; these read LGI and IY.

This sequence belongs to the zinc-containing alcohol dehydrogenase family. As to quaternary structure, homotetramer. Requires Zn(2+) as cofactor.

Its subcellular location is the cytoplasm. It carries out the reaction L-threonine + NAD(+) = (2S)-2-amino-3-oxobutanoate + NADH + H(+). The protein operates within amino-acid degradation; L-threonine degradation via oxydo-reductase pathway; glycine from L-threonine: step 1/2. Catalyzes the NAD(+)-dependent oxidation of L-threonine to 2-amino-3-ketobutyrate. In Xanthomonas euvesicatoria pv. vesicatoria (strain 85-10) (Xanthomonas campestris pv. vesicatoria), this protein is L-threonine 3-dehydrogenase.